A 637-amino-acid chain; its full sequence is MAKHSQHSSPPRKLFDTLNDLWQRAKSEAGLSAEGPEGTRRRNNLILYLLLVLSTLYLLNGYQTLRNEEIPYSEFLKAVAEGRVEQAVVTEQTISGTLKPEAEGESTRPFITVPLWNHELAAELEKKGVKYTVRYGSNWFSSLIFNWIVPIVLLTLFWTWMARRMTGGRGFLSIGKKTRIQADTAAKVTFGDVAGADEAKQELRETIEFLQNPTRIQSLGGRMPKGVLLVGPPGTGKTLLARAVAGEAGVPFFNISGSEFIELFVGVGAARVRDLFEQARQNAPCIIFIDELDAIGRSRGGPVVMGGHDEREQTLNQLLTEMDGFDPSVGVAVMAATNRPEILDKALLRSGRFDRQIVVDKPGLEDRVSILKLHTRKMKLAADVDLRVVAQRTPGFVGADLANAANEAAIIAVRANKAAIGMADFEAAIDRILAGPEKKSRLLNDAEKHRVAVHESGHALVAEIVPTGQPVHKVSIIPRGAAALGFTLQLPVEEKFLSTEQELKDQIAILLGGRTAEELVFGESSSGAQNDLEKASEIARTMVCSLGMSKVLGPLTYGRRQQLAYLSVEGAEERNFSEETARLIDNEVRKLIEEGLQRVREILTHHRVTLDRLAALLREKEVVSGEDVKAVIREAAS.

At 1-44 the chain is on the cytoplasmic side; the sequence is MAKHSQHSSPPRKLFDTLNDLWQRAKSEAGLSAEGPEGTRRRNN. Residues 45–65 form a helical membrane-spanning segment; the sequence is LILYLLLVLSTLYLLNGYQTL. Over 66-141 the chain is Periplasmic; the sequence is RNEEIPYSEF…TVRYGSNWFS (76 aa). Residues 142 to 162 form a helical membrane-spanning segment; it reads SLIFNWIVPIVLLTLFWTWMA. The Cytoplasmic segment spans residues 163–637; that stretch reads RRMTGGRGFL…VKAVIREAAS (475 aa). 231–238 provides a ligand contact to ATP; sequence GPPGTGKT. Position 454 (H454) interacts with Zn(2+). E455 is a catalytic residue. Zn(2+) is bound by residues H458 and D531.

In the central section; belongs to the AAA ATPase family. This sequence in the C-terminal section; belongs to the peptidase M41 family. As to quaternary structure, homohexamer. Zn(2+) is required as a cofactor.

It is found in the cell inner membrane. In terms of biological role, acts as a processive, ATP-dependent zinc metallopeptidase for both cytoplasmic and membrane proteins. Plays a role in the quality control of integral membrane proteins. This chain is ATP-dependent zinc metalloprotease FtsH, found in Methylococcus capsulatus (strain ATCC 33009 / NCIMB 11132 / Bath).